Here is a 433-residue protein sequence, read N- to C-terminus: Aspartate--tRNA(Asp/Asn) ligase (433 aa).

Glutamate 167 lines the L-aspartate pocket. Positions 189–192 (QLFK) are aspartate. Arginine 211 provides a ligand contact to L-aspartate. ATP contacts are provided by residues 211–213 (RAE), 219–221 (RHL), and glutamate 356. The Mg(2+) site is built by glutamate 356 and serine 359. L-aspartate contacts are provided by serine 359 and arginine 363. 404 to 407 (GGER) serves as a coordination point for ATP.

This sequence belongs to the class-II aminoacyl-tRNA synthetase family. Type 2 subfamily. As to quaternary structure, homodimer. It depends on Mg(2+) as a cofactor.

Its subcellular location is the cytoplasm. The catalysed reaction is tRNA(Asx) + L-aspartate + ATP = L-aspartyl-tRNA(Asx) + AMP + diphosphate. Functionally, aspartyl-tRNA synthetase with relaxed tRNA specificity since it is able to aspartylate not only its cognate tRNA(Asp) but also tRNA(Asn). Reaction proceeds in two steps: L-aspartate is first activated by ATP to form Asp-AMP and then transferred to the acceptor end of tRNA(Asp/Asn). The protein is Aspartate--tRNA(Asp/Asn) ligase of Haloferax volcanii (Halobacterium volcanii).